The following is a 57-amino-acid chain: Ribosome modulation factor 2 (57 aa).

Positions 1–24 are disordered; it reads MKRQKRDKLGRAHSNGYQAGLGGK.

The protein belongs to the ribosome modulation factor family.

It is found in the cytoplasm. Its function is as follows. During stationary phase, converts 70S ribosomes to an inactive dimeric form (100S ribosomes). The chain is Ribosome modulation factor 2 from Colwellia psychrerythraea (strain 34H / ATCC BAA-681) (Vibrio psychroerythus).